The primary structure comprises 185 residues: Ribosome-recycling factor (185 aa).

The protein belongs to the RRF family.

The protein resides in the cytoplasm. Its function is as follows. Responsible for the release of ribosomes from messenger RNA at the termination of protein biosynthesis. May increase the efficiency of translation by recycling ribosomes from one round of translation to another. The polypeptide is Ribosome-recycling factor (Corynebacterium efficiens (strain DSM 44549 / YS-314 / AJ 12310 / JCM 11189 / NBRC 100395)).